The sequence spans 370 residues: 4-hydroxy-3-methylbut-2-en-1-yl diphosphate synthase (flavodoxin) (370 aa).

The [4Fe-4S] cluster site is built by Cys270, Cys273, Cys305, and Glu312.

This sequence belongs to the IspG family. [4Fe-4S] cluster serves as cofactor.

It carries out the reaction (2E)-4-hydroxy-3-methylbut-2-enyl diphosphate + oxidized [flavodoxin] + H2O + 2 H(+) = 2-C-methyl-D-erythritol 2,4-cyclic diphosphate + reduced [flavodoxin]. Its pathway is isoprenoid biosynthesis; isopentenyl diphosphate biosynthesis via DXP pathway; isopentenyl diphosphate from 1-deoxy-D-xylulose 5-phosphate: step 5/6. Converts 2C-methyl-D-erythritol 2,4-cyclodiphosphate (ME-2,4cPP) into 1-hydroxy-2-methyl-2-(E)-butenyl 4-diphosphate. The polypeptide is 4-hydroxy-3-methylbut-2-en-1-yl diphosphate synthase (flavodoxin) (Hamiltonella defensa subsp. Acyrthosiphon pisum (strain 5AT)).